The following is a 155-amino-acid chain: 3-hydroxyacyl-[acyl-carrier-protein] dehydratase FabZ (155 aa).

Residue H57 is part of the active site.

It belongs to the thioester dehydratase family. FabZ subfamily.

It localises to the cytoplasm. It carries out the reaction a (3R)-hydroxyacyl-[ACP] = a (2E)-enoyl-[ACP] + H2O. Functionally, involved in unsaturated fatty acids biosynthesis. Catalyzes the dehydration of short chain beta-hydroxyacyl-ACPs and long chain saturated and unsaturated beta-hydroxyacyl-ACPs. In Cereibacter sphaeroides (strain KD131 / KCTC 12085) (Rhodobacter sphaeroides), this protein is 3-hydroxyacyl-[acyl-carrier-protein] dehydratase FabZ.